The primary structure comprises 1254 residues: Unconventional myosin-VI (1254 aa).

One can recognise a Myosin N-terminal SH3-like domain in the interval 2 to 53 (EDGKPVWAPHPTDGFQVGNIVDIGPDSLTIEPLNQKGKTFLALINQVFPAEE). In terms of domain architecture, Myosin motor spans 57–772 (KDVEDNCSLM…KFAEFDQIMK (716 aa)). Position 151-158 (151-158 (GESGAGKT)) interacts with ATP. Phosphoserine is present on Ser-267. The responsible for slow ATPase activity stretch occupies residues 273–317 (YLNRGCTRYFANKETDKQILQNRKSPEYLKAGSLKDPLLDDHGDF). Thr-406 carries the post-translational modification Phosphothreonine. Ser-605 is modified (phosphoserine). An actin-binding region spans residues 666–673 (FIRCIKPN). The required for binding calmodulin stretch occupies residues 783 to 811 (KRVNHWLICSRWKKVQWCSLSVIKLKNKI). The 30-residue stretch at 814-843 (RAEACIKMQKTIRMWLCKRRHKPRIDGLVK) folds into the IQ domain. The tract at residues 836–917 (PRIDGLVKVG…AVLLSALQKK (82 aa)) is three-helix bundle. The interval 918–985 (KQQEEEAERL…EDDEKRIQAE (68 aa)) is SAH. The tract at residues 935 to 956 (EKERKRREEDEQRRRKEEEERR) is disordered. At Ser-1026 the chain carries Phosphoserine. The tract at residues 1037 to 1245 (RGPAVQATKA…ESRQARPTYA (209 aa)) is interaction with TAX1BP1 and CALCOCO2/NDP52. Residues 1085 to 1087 (RRL) are interaction with OPTN. Residues 1096–1117 (KNKKRNTETEQRAPKSVTDYAQ) are disordered. The interaction with TOM1 stretch occupies residues 1117–1245 (QQNPAVQLPA…ESRQARPTYA (129 aa)).

Belongs to the TRAFAC class myosin-kinesin ATPase superfamily. Myosin family. Homodimer; dimerization seems to implicate the unfolding of the three-helix bundle region creating an additional calmodulin binding site, and cargo binding. Component of the DISP/DOCK7-induced septin displacement complex, at least composed of DOCK7, LRCH3 and MYO6. Able to function as a monomer under specific conditions in vitro. Forms a complex with CFTR and DAB2 in the apical membrane of epithelial cells. Binding to calmodulin through a unique insert, not found in other myosins, located in the neck region between the motor domain and the IQ domain appears to contribute to the directionality reversal. This interaction occurs only if the C-terminal lobe of calmodulin is occupied by calcium. Interaction with F-actin/ACTN1 occurs only at the apical brush border domain of the proximal tubule cells. Interacts with DAB2. In vitro, the C-terminal globular tail binds a C-terminal region of DAB2. Interacts with CFTR. Interacts with CABP5. Interacts (via residues 1117-1245) with TOM1 (via residues 392-463). Interacts (via residues 1060-1285) with OPTN. Interacts (via residues 1060-1285) with TAX1BP1 and CALCOCO2/NDP52. Interacts with TOM1L2. Interacts with CLIC5; may work together in a complex which also includes RDX and MYO6 to stabilize linkages between the plasma membrane and subjacent actin cytoskeleton at the base of stereocilia. In terms of processing, phosphorylation in the motor domain, induced by EGF, results in translocation of MYO6 from the cell surface to membrane ruffles and affects F-actin dynamics. Phosphorylated in vitro by p21-activated kinase (PAK). Expressed in all tissues examined including kidney cortex, intestinal mucosa, liver, lung, heart, jowl muscle, brain cortex and medulla, and in the epithelial cell line, LLC-PK1 (at protein level). In the kidney, located to the brush border of adult kidney proximal tubule cells.

It localises to the golgi apparatus. It is found in the trans-Golgi network membrane. Its subcellular location is the nucleus. The protein resides in the cytoplasm. The protein localises to the perinuclear region. It localises to the membrane. It is found in the clathrin-coated pit. Its subcellular location is the cytoplasmic vesicle. The protein resides in the clathrin-coated vesicle. The protein localises to the cell projection. It localises to the filopodium. It is found in the ruffle membrane. Its subcellular location is the microvillus. The protein resides in the cytosol. Myosins are actin-based motor molecules with ATPase activity. Unconventional myosins serve in intracellular movements. Myosin 6 is a reverse-direction motor protein that moves towards the minus-end of actin filaments. Has slow rate of actin-activated ADP release due to weak ATP binding. Functions in a variety of intracellular processes such as vesicular membrane trafficking and cell migration. Required for the structural integrity of the Golgi apparatus via the p53-dependent pro-survival pathway. Appears to be involved in a very early step of clathrin-mediated endocytosis in polarized epithelial cells. Together with TOM1, mediates delivery of endocytic cargo to autophagosomes thereby promoting autophagosome maturation and driving fusion with lysosomes. Links TOM1 with autophagy receptors, such as TAX1BP1; CALCOCO2/NDP52 and OPTN. May act as a regulator of F-actin dynamics. As part of the DISP complex, may regulate the association of septins with actin and thereby regulate the actin cytoskeleton. May play a role in transporting DAB2 from the plasma membrane to specific cellular targets. May play a role in the extension and network organization of neurites. Required for structural integrity of inner ear hair cells. Required for the correct localization of CLIC5 and RDX at the stereocilium base. Modulates RNA polymerase II-dependent transcription. The chain is Unconventional myosin-VI (MYO6) from Sus scrofa (Pig).